A 295-amino-acid polypeptide reads, in one-letter code: Bifunctional protein FolD (295 aa).

NADP(+) is bound by residues 164–166, Ser-193, and Ile-234; that span reads GRS.

This sequence belongs to the tetrahydrofolate dehydrogenase/cyclohydrolase family. As to quaternary structure, homodimer.

It carries out the reaction (6R)-5,10-methylene-5,6,7,8-tetrahydrofolate + NADP(+) = (6R)-5,10-methenyltetrahydrofolate + NADPH. It catalyses the reaction (6R)-5,10-methenyltetrahydrofolate + H2O = (6R)-10-formyltetrahydrofolate + H(+). It functions in the pathway one-carbon metabolism; tetrahydrofolate interconversion. Catalyzes the oxidation of 5,10-methylenetetrahydrofolate to 5,10-methenyltetrahydrofolate and then the hydrolysis of 5,10-methenyltetrahydrofolate to 10-formyltetrahydrofolate. This chain is Bifunctional protein FolD, found in Flavobacterium johnsoniae (strain ATCC 17061 / DSM 2064 / JCM 8514 / BCRC 14874 / CCUG 350202 / NBRC 14942 / NCIMB 11054 / UW101) (Cytophaga johnsonae).